Reading from the N-terminus, the 289-residue chain is MSELLQLPPGFRFHPTDEELVMHYLCRKCASQSIAVPIIAEIDLYKYDPWELPGLALYGEKEWYFFSPRDRKYPNGSRPNRSAGSGYWKATGADKPIGLPKPVGIKKALVFYAGKAPKGEKTNWIMHEYRLADVDRSVRKKKNSLRLDDWVLCRIYNKKGATERRGPPPPVVYGDEIMEEKPKVTEMVMPPPPQQTSEFAYFDTSDSVPKLHTTDSSCSEQVVSPEFTSEVQSEPKWKDWSAVSNDNNNTLDFGFNYIDATVDNAFGGGGSSNQMFPLQDMFMYMQKPY.

An NAC domain is found at 7–158 (LPPGFRFHPT…DWVLCRIYNK (152 aa)).

Interacts with KIN10 and KIN11.

The protein resides in the nucleus. This chain is NAC domain-containing protein 2 (NAC002), found in Arabidopsis thaliana (Mouse-ear cress).